The primary structure comprises 311 residues: Mitochondrial FAD carrier protein FLX1 (311 aa).

3 Solcar repeats span residues 7-101 (TPLQ…TKEL), 123-210 (MNSL…LKQR), and 224-310 (LTNL…LKHR). Helical transmembrane passes span 13 to 33 (VISG…LDLL), 77 to 97 (LSIN…LYGV), 129 to 149 (LSAG…IWVI), 183 to 203 (LWKG…YFAV), 230 to 250 (IEIT…FQLL), and 266 to 286 (LFPL…YKGL).

The protein belongs to the mitochondrial carrier (TC 2.A.29) family.

It localises to the mitochondrion inner membrane. Functionally, transport of FAD from the cytosol to the mitochondrial matrix. The chain is Mitochondrial FAD carrier protein FLX1 (FLX1) from Saccharomyces cerevisiae (strain ATCC 204508 / S288c) (Baker's yeast).